The sequence spans 508 residues: Cytochrome P450 4A12B (508 aa).

An N-terminal signal peptide occupies residues 1 to 37; the sequence is MSASALSSIRFPGSISEYLQVASVLSLLLLLFKTAQL. Heme is bound by residues E319 and C455.

This sequence belongs to the cytochrome P450 family. Heme is required as a cofactor. As to expression, expressed in lung, but almost undetectable in the kidneys of five different strains.

The protein resides in the endoplasmic reticulum membrane. It is found in the microsome membrane. The catalysed reaction is an organic molecule + reduced [NADPH--hemoprotein reductase] + O2 = an alcohol + oxidized [NADPH--hemoprotein reductase] + H2O + H(+). The enzyme catalyses dodecanoate + reduced [NADPH--hemoprotein reductase] + O2 = 11-hydroxydodecanoate + oxidized [NADPH--hemoprotein reductase] + H2O + H(+). It carries out the reaction dodecanoate + reduced [NADPH--hemoprotein reductase] + O2 = 12-hydroxydodecanoate + oxidized [NADPH--hemoprotein reductase] + H2O + H(+). It catalyses the reaction (5Z,8Z,11Z,14Z)-eicosatetraenoate + reduced [NADPH--hemoprotein reductase] + O2 = 18-hydroxy-(5Z,8Z,11Z,14Z)-eicosatetraenoate + oxidized [NADPH--hemoprotein reductase] + H2O + H(+). The catalysed reaction is (5Z,8Z,11Z,14Z)-eicosatetraenoate + reduced [NADPH--hemoprotein reductase] + O2 = 19-hydroxy-(5Z,8Z,11Z,14Z)-eicosatetraenoate + oxidized [NADPH--hemoprotein reductase] + H2O + H(+). The enzyme catalyses (5Z,8Z,11Z,14Z)-eicosatetraenoate + reduced [NADPH--hemoprotein reductase] + O2 = 20-hydroxy-(5Z,8Z,11Z,14Z)-eicosatetraenoate + oxidized [NADPH--hemoprotein reductase] + H2O + H(+). It carries out the reaction (5Z,8Z,11Z,14Z,17Z)-eicosapentaenoate + reduced [NADPH--hemoprotein reductase] + O2 = 19-hydroxy-(5Z,8Z,11Z,14Z,17Z)-eicosapentaenoate + oxidized [NADPH--hemoprotein reductase] + H2O + H(+). It catalyses the reaction (5Z,8Z,11Z,14Z,17Z)-eicosapentaenoate + reduced [NADPH--hemoprotein reductase] + O2 = 20-hydroxy-(5Z,8Z,11Z,14Z,17Z)-eicosapentaenoate + oxidized [NADPH--hemoprotein reductase] + H2O + H(+). The catalysed reaction is (5Z,8Z,11Z,14Z,17Z)-eicosapentaenoate + reduced [NADPH--hemoprotein reductase] + O2 = (17S,18R)-epoxy-(5Z,8Z,11Z,14Z)-eicosatetraenoate + oxidized [NADPH--hemoprotein reductase] + H2O + H(+). The enzyme catalyses (5Z,8Z,11Z,14Z,17Z)-eicosapentaenoate + reduced [NADPH--hemoprotein reductase] + O2 = (17R,18S)-epoxy-(5Z,8Z,11Z,14Z)-eicosatetraenoate + oxidized [NADPH--hemoprotein reductase] + H2O + H(+). The protein operates within lipid metabolism; fatty acid metabolism. Activated by cytochrome b5. The Vmax almost doubles in the presence of cytochrome b5. Functionally, a cytochrome P450 monooxygenase involved in the metabolism of fatty acids and their oxygenated derivatives (oxylipins). Mechanistically, uses molecular oxygen inserting one oxygen atom into a substrate, and reducing the second into a water molecule, with two electrons provided by NADPH via cytochrome P450 reductase (CPR; NADPH-ferrihemoprotein reductase). Catalyzes predominantly the oxidation of the terminal carbon (omega-oxidation) of saturated and unsaturated fatty acids. May act as a major omega-hydroxylase for dodecanoic (lauric) acid in kidney. Participates in omega-hydroxylation of (5Z,8Z,11Z,14Z)-eicosatetraenoic acid (arachidonate) to 20-hydroxyeicosatetraenoic acid (20-HETE), a signaling molecule acting both as vasoconstrictive and natriuretic with overall effect on arterial blood pressure. Acts as an omega-hydroxylase and epoxidase toward (5Z,8Z,11Z,14Z,17Z)-eicosapentaenoc acid (EPA). Catalyzes the epoxidation of the last double bond of EPA with no preferred stereoselectivity, producing both (R,S) and (S,R) stereoisomers. Can also catalyze the omega-1 and omega-2 oxidation of fatty acids with lower efficiency. This Mus musculus (Mouse) protein is Cytochrome P450 4A12B.